We begin with the raw amino-acid sequence, 103 residues long: Small ribosomal subunit protein uS10 (103 aa).

This sequence belongs to the universal ribosomal protein uS10 family. Part of the 30S ribosomal subunit.

Its function is as follows. Involved in the binding of tRNA to the ribosomes. The sequence is that of Small ribosomal subunit protein uS10 from Stutzerimonas stutzeri (strain A1501) (Pseudomonas stutzeri).